Here is a 476-residue protein sequence, read N- to C-terminus: Serine--tRNA ligase (476 aa).

279–281 (TAE) contacts L-serine. ATP is bound at residue 310–312 (RAE). Glutamate 333 contacts L-serine. 400–403 (EISS) contacts ATP. Residue serine 435 participates in L-serine binding.

It belongs to the class-II aminoacyl-tRNA synthetase family. Type-1 seryl-tRNA synthetase subfamily. As to quaternary structure, homodimer. The tRNA molecule binds across the dimer.

It localises to the cytoplasm. The enzyme catalyses tRNA(Ser) + L-serine + ATP = L-seryl-tRNA(Ser) + AMP + diphosphate + H(+). It catalyses the reaction tRNA(Sec) + L-serine + ATP = L-seryl-tRNA(Sec) + AMP + diphosphate + H(+). The protein operates within aminoacyl-tRNA biosynthesis; selenocysteinyl-tRNA(Sec) biosynthesis; L-seryl-tRNA(Sec) from L-serine and tRNA(Sec): step 1/1. Catalyzes the attachment of serine to tRNA(Ser). Is also able to aminoacylate tRNA(Sec) with serine, to form the misacylated tRNA L-seryl-tRNA(Sec), which will be further converted into selenocysteinyl-tRNA(Sec). This Rhodopseudomonas palustris (strain BisA53) protein is Serine--tRNA ligase.